The sequence spans 361 residues: Alanine racemase (361 aa).

Residue lysine 34 is the Proton acceptor; specific for D-alanine of the active site. Position 34 is an N6-(pyridoxal phosphate)lysine (lysine 34). Arginine 129 is a binding site for substrate. Tyrosine 256 (proton acceptor; specific for L-alanine) is an active-site residue. Methionine 304 serves as a coordination point for substrate.

It belongs to the alanine racemase family. Homodimer. Requires pyridoxal 5'-phosphate as cofactor.

It carries out the reaction L-alanine = D-alanine. The protein operates within amino-acid biosynthesis; D-alanine biosynthesis; D-alanine from L-alanine: step 1/1. In terms of biological role, catalyzes the interconversion of L-alanine and D-alanine. May also act on other amino acids. This chain is Alanine racemase (alr), found in Corynebacterium glutamicum (strain ATCC 13032 / DSM 20300 / JCM 1318 / BCRC 11384 / CCUG 27702 / LMG 3730 / NBRC 12168 / NCIMB 10025 / NRRL B-2784 / 534).